Reading from the N-terminus, the 410-residue chain is Riboflavin biosynthesis protein RibBA (410 aa).

The DHBP synthase stretch occupies residues 1 to 205 (MENKRIDTIE…IKDLVAFQMR (205 aa)). Residues 30 to 31 (RE), D35, 144 to 148 (RVGHT), and E168 contribute to the D-ribulose 5-phosphate site. Residue E31 coordinates Mg(2+). H147 is a binding site for Mg(2+). A GTP cyclohydrolase II region spans residues 206 to 410 (RSKLVQRAVE…ISCSCGSGNH (205 aa)). Position 256–260 (256–260 (RVHSQ)) interacts with GTP. Zn(2+) contacts are provided by C261, C272, and C274. Residues Q277, 299–301 (EGR), and T321 contribute to the GTP site. The Proton acceptor; for GTP cyclohydrolase activity role is filled by D333. R335 functions as the Nucleophile; for GTP cyclohydrolase activity in the catalytic mechanism. GTP is bound by residues T356 and K361.

It in the N-terminal section; belongs to the DHBP synthase family. This sequence in the C-terminal section; belongs to the GTP cyclohydrolase II family. The cofactor is Mg(2+). Requires Mn(2+) as cofactor. Zn(2+) is required as a cofactor.

It carries out the reaction D-ribulose 5-phosphate = (2S)-2-hydroxy-3-oxobutyl phosphate + formate + H(+). It catalyses the reaction GTP + 4 H2O = 2,5-diamino-6-hydroxy-4-(5-phosphoribosylamino)-pyrimidine + formate + 2 phosphate + 3 H(+). It functions in the pathway cofactor biosynthesis; riboflavin biosynthesis; 2-hydroxy-3-oxobutyl phosphate from D-ribulose 5-phosphate: step 1/1. The protein operates within cofactor biosynthesis; riboflavin biosynthesis; 5-amino-6-(D-ribitylamino)uracil from GTP: step 1/4. Its function is as follows. Catalyzes the conversion of D-ribulose 5-phosphate to formate and 3,4-dihydroxy-2-butanone 4-phosphate. In terms of biological role, catalyzes the conversion of GTP to 2,5-diamino-6-ribosylamino-4(3H)-pyrimidinone 5'-phosphate (DARP), formate and pyrophosphate. The chain is Riboflavin biosynthesis protein RibBA from Chlorobium phaeovibrioides (strain DSM 265 / 1930) (Prosthecochloris vibrioformis (strain DSM 265)).